We begin with the raw amino-acid sequence, 649 residues long: Mitochondrial Rho GTPase 1 (649 aa).

Residues Met1 to Ala623 lie on the Cytoplasmic side of the membrane. Positions Lys3–Tyr176 constitute a Miro 1 domain. GTP-binding positions include Gly12–Thr19, Asp61–Asp63, and Asn115–Asp118. 2 EF-hand domains span residues Ser192 to Lys227 and Lys320 to Leu355. Positions 205, 207, 209, 216, 333, 335, 337, and 344 each coordinate Ca(2+). The 166-residue stretch at Arg436–Glu601 folds into the Miro 2 domain. GTP is bound by residues Gly445–Ser452, Glu481–Asp485, and Leu550–Asp553. A helical; Anchor for type IV membrane protein membrane pass occupies residues Val624–Leu644. Residues Lys645–Gln649 lie on the Mitochondrial intermembrane side of the membrane.

This sequence belongs to the mitochondrial Rho GTPase family.

The protein localises to the mitochondrion outer membrane. Its function is as follows. Mitochondrial GTPase involved in mitochondrial trafficking. Probably involved in control of anterograde transport of mitochondria and their subcellular distribution. This chain is Mitochondrial Rho GTPase 1 (GEM1), found in Candida glabrata (strain ATCC 2001 / BCRC 20586 / JCM 3761 / NBRC 0622 / NRRL Y-65 / CBS 138) (Yeast).